Here is a 232-residue protein sequence, read N- to C-terminus: 5'-methylthioadenosine/S-adenosylhomocysteine nucleosidase (232 aa).

Glu12 acts as the Proton acceptor in catalysis. Substrate-binding positions include Gly78, Ile152, and 173 to 174 (ME). The Proton donor role is filled by Asp197.

The protein belongs to the PNP/UDP phosphorylase family. MtnN subfamily. As to quaternary structure, homodimer.

It carries out the reaction S-adenosyl-L-homocysteine + H2O = S-(5-deoxy-D-ribos-5-yl)-L-homocysteine + adenine. It catalyses the reaction S-methyl-5'-thioadenosine + H2O = 5-(methylsulfanyl)-D-ribose + adenine. The enzyme catalyses 5'-deoxyadenosine + H2O = 5-deoxy-D-ribose + adenine. Its pathway is amino-acid biosynthesis; L-methionine biosynthesis via salvage pathway; S-methyl-5-thio-alpha-D-ribose 1-phosphate from S-methyl-5'-thioadenosine (hydrolase route): step 1/2. In terms of biological role, catalyzes the irreversible cleavage of the glycosidic bond in both 5'-methylthioadenosine (MTA) and S-adenosylhomocysteine (SAH/AdoHcy) to adenine and the corresponding thioribose, 5'-methylthioribose and S-ribosylhomocysteine, respectively. Also cleaves 5'-deoxyadenosine, a toxic by-product of radical S-adenosylmethionine (SAM) enzymes, into 5-deoxyribose and adenine. Thus, is required for in vivo function of the radical SAM enzymes biotin synthase and lipoic acid synthase, that are inhibited by 5'-deoxyadenosine accumulation. This chain is 5'-methylthioadenosine/S-adenosylhomocysteine nucleosidase, found in Salmonella choleraesuis (strain SC-B67).